The primary structure comprises 238 residues: MRSDGREAGSLRGINITRHYIKHAEGAVLVEFGDTKVICTASVEESVPPFLRGKGTGWVTAEYSMLPRSTHTRSSREAARGKIGGRTHEIQRLIGRSLRAVTDLTLLGERSVLIDCDVIQADGGTRTASITGAYVALVDALHLLVERGVLPLLPIKEAVAAVSVGIVDGNILLDLNYVEDSAAEVDMNFVMTSSDRFVEVQGTAESEPFTVEQMDGMRVAAVEGIRKLFSIQNEALSR.

Phosphate-binding positions include Arg86 and 124–126; that span reads GTR.

This sequence belongs to the RNase PH family. In terms of assembly, homohexameric ring arranged as a trimer of dimers.

The catalysed reaction is tRNA(n+1) + phosphate = tRNA(n) + a ribonucleoside 5'-diphosphate. Its function is as follows. Phosphorolytic 3'-5' exoribonuclease that plays an important role in tRNA 3'-end maturation. Removes nucleotide residues following the 3'-CCA terminus of tRNAs; can also add nucleotides to the ends of RNA molecules by using nucleoside diphosphates as substrates, but this may not be physiologically important. Probably plays a role in initiation of 16S rRNA degradation (leading to ribosome degradation) during starvation. In Geobacter metallireducens (strain ATCC 53774 / DSM 7210 / GS-15), this protein is Ribonuclease PH.